The following is a 707-amino-acid chain: UvrABC system protein C (707 aa).

Positions 14–94 (AEPGCYLMKD…IKKHRPRFNV (81 aa)) constitute a GIY-YIG domain. Residues 206 to 241 (GELVERLRGRMAGAAEGLRFEEAARLRDQLQAVERS) form the UVR domain. A disordered region spans residues 655–707 (DAPPIAADEPSGAPAGAPGGGPAEASPEAVAAATEAEIDAALADEDASPEPAA). Composition is skewed to low complexity over residues 660 to 670 (AADEPSGAPAG) and 677 to 689 (AEAS…AATE). Over residues 690–707 (AEIDAALADEDASPEPAA) the composition is skewed to acidic residues.

This sequence belongs to the UvrC family. As to quaternary structure, interacts with UvrB in an incision complex.

The protein localises to the cytoplasm. Functionally, the UvrABC repair system catalyzes the recognition and processing of DNA lesions. UvrC both incises the 5' and 3' sides of the lesion. The N-terminal half is responsible for the 3' incision and the C-terminal half is responsible for the 5' incision. This chain is UvrABC system protein C, found in Anaeromyxobacter dehalogenans (strain 2CP-1 / ATCC BAA-258).